Reading from the N-terminus, the 306-residue chain is Ribonuclease Z (306 aa).

Positions 63, 65, 67, 68, 141, 211, and 269 each coordinate Zn(2+). D67 serves as the catalytic Proton acceptor.

It belongs to the RNase Z family. As to quaternary structure, homodimer. Zn(2+) serves as cofactor.

It catalyses the reaction Endonucleolytic cleavage of RNA, removing extra 3' nucleotides from tRNA precursor, generating 3' termini of tRNAs. A 3'-hydroxy group is left at the tRNA terminus and a 5'-phosphoryl group is left at the trailer molecule.. Its function is as follows. Zinc phosphodiesterase, which displays some tRNA 3'-processing endonuclease activity. Probably involved in tRNA maturation, by removing a 3'-trailer from precursor tRNA. This is Ribonuclease Z from Staphylococcus aureus (strain Mu3 / ATCC 700698).